The following is a 172-amino-acid chain: Large ribosomal subunit protein bL17 (172 aa).

Residues 123–172 (ATGSKRAQTEEAASQEPAAEAGKQPAEGATSVQTAEAADASQAEGEAEEK) are disordered. Low complexity predominate over residues 132–143 (EEAASQEPAAEA).

Belongs to the bacterial ribosomal protein bL17 family. In terms of assembly, part of the 50S ribosomal subunit. Contacts protein L32.

In Thermobifida fusca (strain YX), this protein is Large ribosomal subunit protein bL17.